The primary structure comprises 325 residues: MLLAPGDVIKRSSEELKQRQIQINLIDWIESESGKEDKAEPKEESKAEESKDGQGTQSESSQKKEGSKEAKDADVDRRIHTAVGSGSSAKGPGVRANENVDRGDGKVGGGGGNADAGVGTIGANGGRWVVLTEEIARAIESKYGTKIDVYRDKVPAQIIEVERSLQKELGISREGVAEQTERLRDLRRKEKSGAHAKAAERGRRKQGKKPHGDVQKEGTEEEKTSEEQASVGIAIEGVMSQKKLLSMIGGVERKMAPIGARESAVMLVSNSIKDVVRATAYFTAPTGDPHWKEVAREASKKKNILAYTSTGGDVKTEFLHLIDHL.

Disordered regions lie at residues 23–123 (INLI…TIGA) and 176–229 (VAEQ…EEQA). Composition is skewed to basic and acidic residues over residues 32 to 52 (ESGK…ESKD) and 61 to 79 (SQKK…DRRI). Residues 106-123 (KVGGGGGNADAGVGTIGA) show a composition bias toward gly residues. Composition is skewed to basic and acidic residues over residues 176 to 201 (VAEQ…AAER) and 210 to 226 (PHGD…KTSE).

Belongs to the orbivirus VP6 family.

It localises to the virion. Its function is as follows. Surrounds and interacts with the genomic dsRNA. Possesses ss- and dsRNA-binding capacity. Its hydrophilic nature and capability to bind ss- and dsRNA suggest that it interacts with BTV genomic RNA. The protein is Protein VP6-B (Segment-9) of Bluetongue virus 10 (isolate USA) (BTV 10).